A 479-amino-acid polypeptide reads, in one-letter code: Flavonol 3-O-glucosyltransferase UGT71C4 (479 aa).

The active-site Proton acceptor is the His-17. Position 17 (His-17) interacts with an anthocyanidin. The active-site Charge relay is the Asp-127. 8 residues coordinate UDP-alpha-D-glucose: Thr-150, Ala-350, Gln-352, His-367, Trp-370, Asn-371, Ser-372, and Glu-375. Ala-390 contacts an anthocyanidin. Residues Glu-391 and Gln-392 each coordinate UDP-alpha-D-glucose.

The protein belongs to the UDP-glycosyltransferase family.

It carries out the reaction a flavonol + UDP-alpha-D-glucose = a flavonol 3-O-beta-D-glucoside + UDP + H(+). The catalysed reaction is a 7-O-hydroxy-flavonol + UDP-alpha-D-glucose = a flavonol 7-O-beta-D-glucoside + UDP + H(+). Functionally, possesses quercetin 3-O-glucosyltransferase and 7-O-glucosyltransferase activities in vitro. Also active in vitro on benzoates and benzoate derivatives. The protein is Flavonol 3-O-glucosyltransferase UGT71C4 of Arabidopsis thaliana (Mouse-ear cress).